Reading from the N-terminus, the 807-residue chain is Phenylalanine--tRNA ligase beta subunit (807 aa).

The tRNA-binding domain occupies 39-153 (SARSQGVVVG…EIPAVGTPVA (115 aa)). The B5 domain maps to 407–491 (RTPVPLQLRR…RLVGFDKFGS (85 aa)). Residues Asp-469, Asp-475, Glu-478, and Glu-479 each contribute to the Mg(2+) site. The region spanning 713 to 806 (PTVPASERDL…LSKQFKAELR (94 aa)) is the FDX-ACB domain.

It belongs to the phenylalanyl-tRNA synthetase beta subunit family. Type 1 subfamily. As to quaternary structure, tetramer of two alpha and two beta subunits. The cofactor is Mg(2+).

It localises to the cytoplasm. The catalysed reaction is tRNA(Phe) + L-phenylalanine + ATP = L-phenylalanyl-tRNA(Phe) + AMP + diphosphate + H(+). The chain is Phenylalanine--tRNA ligase beta subunit from Synechococcus sp. (strain CC9902).